A 60-amino-acid chain; its full sequence is UPF0434 protein YcaR (60 aa).

It belongs to the UPF0434 family.

The sequence is that of UPF0434 protein YcaR from Salmonella arizonae (strain ATCC BAA-731 / CDC346-86 / RSK2980).